The sequence spans 901 residues: MLIKLLTKVFGSRNDRTLRRMRKAVSLINAMEPEMEKLSDDELKAKTNEFRARIEKGESVESLIPEAFAVVREASKRVFGMRHFDVQLLGGMVLNDRCIAEMRTGEGKTLTATLPAYLNALSGKGVHVVTVNDYLAQRDAENNRPLFEFLGMSVGINLPGMPAPAKREAYAADITYGTNNEYGFDYLRDNMAFSPEERVQRKLHYALVDEVDSILIDEARTPLIISGPAEDSSEMYKKVNKIIPHLIRQEKEDSDTFQGEGHFSVDEKARQVNLTERGLVLIEELLVQEGIMDEGESLYSPGNIMLMHHVTAALRAHALFTRDVDYIVKDGEVIIVDEHTGRTMQGRRWSDGLHQAVEAKEGVEIQNENQTLASITFQNYFRLYEKLAGMTGTADTEAFEFSSIYKLDTVVVPTNRPMIRKDLPDLVYMTEAEKIQAIIEDIKERTANGQPVLVGTISIEKSEVVSRELTKAGIKHNVLNAKFHANEAGIVAQAGYPAAVTIATNMAGRGTDIMLGGSWQAEVAALEAPTEEQIAQIKADWQVRHDAVLAAGGLHIIGTERHESRRIDNQLRGRSGRQGDPGSSRFYLSMEDALMRIFASDRVSGMMRKLGMKPGEAIEHPWVTKAIANAQRKVESRNFDIRKQLLEYDDVANDQRRAIYTQRNELLDVSDVSDTINSIREDVFKATIDAYIPPQSLEEMWDIPGLQERLKNDFDLELPIAEWLDKEPELHEETLRERILAQSIEVYQRKEEVVGAEMMRHFEKGVMLQTLDSLWKEHLAAMDYLRQGIHLRGYAQKDPKQEYKRESFAMFAAMLESLKYEVISTLSKVQVRMPEEVEAMEMQRREEAERLAQMQQLSHQDDDAAVAADLAAQTGERKIGRNDPCPCGSGKKYKQCHGRLS.

ATP-binding positions include Q87, 105-109 (GEGKT), and D512. Residues C885, C887, C896, and H897 each contribute to the Zn(2+) site.

The protein belongs to the SecA family. In terms of assembly, monomer and homodimer. Part of the essential Sec protein translocation apparatus which comprises SecA, SecYEG and auxiliary proteins SecDF-YajC and YidC. Zn(2+) is required as a cofactor.

Its subcellular location is the cell inner membrane. The protein resides in the cytoplasm. The enzyme catalyses ATP + H2O + cellular proteinSide 1 = ADP + phosphate + cellular proteinSide 2.. Part of the Sec protein translocase complex. Interacts with the SecYEG preprotein conducting channel. Has a central role in coupling the hydrolysis of ATP to the transfer of proteins into and across the cell membrane, serving both as a receptor for the preprotein-SecB complex and as an ATP-driven molecular motor driving the stepwise translocation of polypeptide chains across the membrane. The protein is Protein translocase subunit SecA of Salmonella paratyphi B (strain ATCC BAA-1250 / SPB7).